The primary structure comprises 63 residues: Protein BP4A (63 aa).

Pollen specific.

The protein is Protein BP4A (BP4A) of Brassica napus (Rape).